A 325-amino-acid polypeptide reads, in one-letter code: Tartrate-resistant acid phosphatase type 5 (325 aa).

The N-terminal stretch at 1–21 (MDMWTALLILQALLLPSLADG) is a signal peptide. Fe cation is bound by residues Asp33, Asp71, Tyr74, and Asn110. N-linked (GlcNAc...) asparagine glycosylation is found at Asn116 and Asn147. A disulfide bridge connects residues Cys161 and Cys219. Fe cation is bound by residues His205, His240, and His242.

Belongs to the metallophosphoesterase superfamily. Purple acid phosphatase family. In terms of assembly, exists either as monomer or, after proteolytic processing, as a dimer of two chains linked by disulfide bond(s). It depends on Fe cation as a cofactor.

It is found in the lysosome. It catalyses the reaction a phosphate monoester + H2O = an alcohol + phosphate. Involved in osteopontin/bone sialoprotein dephosphorylation. Its expression seems to increase in certain pathological states such as Gaucher and Hodgkin diseases, the hairy cell, the B-cell, and the T-cell leukemias. The protein is Tartrate-resistant acid phosphatase type 5 (ACP5) of Homo sapiens (Human).